A 95-amino-acid chain; its full sequence is Aspartyl/glutamyl-tRNA(Asn/Gln) amidotransferase subunit C (95 aa).

It belongs to the GatC family. In terms of assembly, heterotrimer of A, B and C subunits.

The catalysed reaction is L-glutamyl-tRNA(Gln) + L-glutamine + ATP + H2O = L-glutaminyl-tRNA(Gln) + L-glutamate + ADP + phosphate + H(+). The enzyme catalyses L-aspartyl-tRNA(Asn) + L-glutamine + ATP + H2O = L-asparaginyl-tRNA(Asn) + L-glutamate + ADP + phosphate + 2 H(+). Functionally, allows the formation of correctly charged Asn-tRNA(Asn) or Gln-tRNA(Gln) through the transamidation of misacylated Asp-tRNA(Asn) or Glu-tRNA(Gln) in organisms which lack either or both of asparaginyl-tRNA or glutaminyl-tRNA synthetases. The reaction takes place in the presence of glutamine and ATP through an activated phospho-Asp-tRNA(Asn) or phospho-Glu-tRNA(Gln). This chain is Aspartyl/glutamyl-tRNA(Asn/Gln) amidotransferase subunit C, found in Chlorobium phaeobacteroides (strain BS1).